Here is a 535-residue protein sequence, read N- to C-terminus: Butyrophilin-like protein 9 (535 aa).

Positions Met-1–Pro-34 are cleaved as a signal peptide. The Extracellular portion of the chain corresponds to Ser-35–Lys-256. Residues Glu-54–Phe-135 form the Ig-like V-type domain. Cys-59 and Cys-133 are joined by a disulfide. Asn-102, Asn-139, and Asn-224 each carry an N-linked (GlcNAc...) asparagine glycan. Residues Ser-257–Leu-277 traverse the membrane as a helical segment. The stretch at Val-276–Glu-315 forms a coiled coil. At Arg-278–Trp-535 the chain is on the cytoplasmic side. A B30.2/SPRY domain is found at Asp-310 to Gly-509. The interval Ser-340–Phe-367 is disordered.

It belongs to the immunoglobulin superfamily. BTN/MOG family.

The protein resides in the membrane. The polypeptide is Butyrophilin-like protein 9 (BTNL9) (Homo sapiens (Human)).